The primary structure comprises 266 residues: Protein-ADP-ribose hydrolase (266 aa).

Positions 74-265 constitute a Macro domain; it reads TDLKDLKPIK…LYKEALNRDA (192 aa). Residues Asp-93, Ile-94, and Asn-107 each coordinate ADP-D-ribose. Zn(2+)-binding residues include Cys-113, His-118, and Cys-120. The ADP-D-ribose site is built by Cys-120, Ile-121, Asp-122, Ser-212, Thr-213, Gly-214, and Phe-216.

It belongs to the MacroD-type family. Zn-Macro subfamily. Monomer. Directly interacts with the lipoylated form of GcvH-L. The cofactor is Zn(2+).

It catalyses the reaction 4-O-(ADP-D-ribosyl)-L-aspartyl-[protein] + H2O = L-aspartyl-[protein] + ADP-D-ribose + H(+). In terms of biological role, ADP-ribosylhydrolase that specifically reverses the SirTM-mediated mono-ADP-ribosylation at an asparatate residue of GcvH-L (SAV0324), by releasing ADP-ribose from the target protein. May play a role in the regulation of the response to host-induced oxidative stress. The polypeptide is Protein-ADP-ribose hydrolase (Staphylococcus aureus (strain Mu50 / ATCC 700699)).